The chain runs to 510 residues: Probable ADP-ribosylation factor-binding protein C1F3.05 (510 aa).

One can recognise a VHS domain in the interval 14-150 (ATDQFNLEPN…LMAFRGYKFP (137 aa)). One can recognise a GAT domain in the interval 177–301 (LEAHKAKLQE…VIEECSNSDL (125 aa)). Residues 391-510 (TNSSLTSILQ…VEQGESHLPL (120 aa)) enclose the GAE domain.

It is found in the golgi apparatus. The protein localises to the trans-Golgi network. In terms of biological role, may play a role in the regulation of membrane traffic through the trans-Golgi network. This Schizosaccharomyces pombe (strain 972 / ATCC 24843) (Fission yeast) protein is Probable ADP-ribosylation factor-binding protein C1F3.05.